Reading from the N-terminus, the 216-residue chain is Protein Syd (216 aa).

It belongs to the Syd family.

Its subcellular location is the cell inner membrane. In terms of biological role, interacts with the SecY protein in vivo. May bind preferentially to an uncomplexed state of SecY, thus functioning either as a chelating agent for excess SecY in the cell or as a regulatory factor that negatively controls the translocase function. This is Protein Syd from Shewanella baltica (strain OS185).